The chain runs to 185 residues: Large ribosomal subunit protein uL5 (185 aa).

The protein belongs to the universal ribosomal protein uL5 family. As to quaternary structure, part of the 50S ribosomal subunit; part of the 5S rRNA/L5/L18/L25 subcomplex. Contacts the 5S rRNA and the P site tRNA. Forms a bridge to the 30S subunit in the 70S ribosome.

Functionally, this is one of the proteins that bind and probably mediate the attachment of the 5S RNA into the large ribosomal subunit, where it forms part of the central protuberance. In the 70S ribosome it contacts protein S13 of the 30S subunit (bridge B1b), connecting the 2 subunits; this bridge is implicated in subunit movement. Contacts the P site tRNA; the 5S rRNA and some of its associated proteins might help stabilize positioning of ribosome-bound tRNAs. The chain is Large ribosomal subunit protein uL5 from Rhizobium leguminosarum bv. trifolii (strain WSM2304).